A 104-amino-acid chain; its full sequence is Large ribosomal subunit protein uL24 (104 aa).

Belongs to the universal ribosomal protein uL24 family. In terms of assembly, part of the 50S ribosomal subunit.

In terms of biological role, one of two assembly initiator proteins, it binds directly to the 5'-end of the 23S rRNA, where it nucleates assembly of the 50S subunit. Its function is as follows. One of the proteins that surrounds the polypeptide exit tunnel on the outside of the subunit. This chain is Large ribosomal subunit protein uL24, found in Chromobacterium violaceum (strain ATCC 12472 / DSM 30191 / JCM 1249 / CCUG 213 / NBRC 12614 / NCIMB 9131 / NCTC 9757 / MK).